Consider the following 398-residue polypeptide: Succinate--CoA ligase [ADP-forming] subunit beta (398 aa).

In terms of domain architecture, ATP-grasp spans 9 to 254 (KRLLHTYGAP…LTEEDPKEIE (246 aa)). ATP-binding positions include K46, 53-55 (GRG), E109, A112, and E117. N209 and D223 together coordinate Mg(2+). Residues N274 and 331-333 (GIM) each bind substrate.

Belongs to the succinate/malate CoA ligase beta subunit family. As to quaternary structure, heterotetramer of two alpha and two beta subunits. Requires Mg(2+) as cofactor.

The catalysed reaction is succinate + ATP + CoA = succinyl-CoA + ADP + phosphate. It catalyses the reaction GTP + succinate + CoA = succinyl-CoA + GDP + phosphate. The protein operates within carbohydrate metabolism; tricarboxylic acid cycle; succinate from succinyl-CoA (ligase route): step 1/1. Functionally, succinyl-CoA synthetase functions in the citric acid cycle (TCA), coupling the hydrolysis of succinyl-CoA to the synthesis of either ATP or GTP and thus represents the only step of substrate-level phosphorylation in the TCA. The beta subunit provides nucleotide specificity of the enzyme and binds the substrate succinate, while the binding sites for coenzyme A and phosphate are found in the alpha subunit. The polypeptide is Succinate--CoA ligase [ADP-forming] subunit beta (Brucella abortus (strain S19)).